The sequence spans 795 residues: Volume-regulated anion channel subunit LRRC8E (795 aa).

At 1-22 (MIPVAEFKQFTEQQPAFKVLKP) the chain is on the cytoplasmic side. A helical transmembrane segment spans residues 23–43 (WWDVLAEYLTVAMLMIGVFGC). The Extracellular segment spans residues 44–116 (TLQVTQDKII…YETALHWYAK (73 aa)). C54 and C300 form a disulfide bridge. N63 is a glycosylation site (N-linked (GlcNAc...) asparagine). Residues 117–137 (YFPYLVVIHTLIFMVCTSFWF) form a helical membrane-spanning segment. Residues 138 to 264 (KFPGTSSKIE…IRQTVLKVCK (127 aa)) are Cytoplasmic-facing. A helical transmembrane segment spans residues 265 to 285 (FFAILVYNLIYVEKISFLVAC). Over 286–312 (RVETSEITGYASFCCNHTKAHLFSKLA) the chain is Extracellular. N-linked (GlcNAc...) asparagine glycosylation occurs at N301. A helical membrane pass occupies residues 313–333 (FCYISFVCVYGITCLYTLYWL). Topologically, residues 334–795 (FHRPLKEYSF…AEVREKMEEE (462 aa)) are cytoplasmic. LRR repeat units follow at residues 535-556 (QLKV…TDVA), 558-578 (HLQR…NSLK), 582-603 (VLRE…IFSL), 605-626 (ALQE…LSFQ), 630-651 (KLVT…VRKL), 653-674 (SLEQ…LGQC), 676-697 (GLRL…LGLL), 699-720 (SLQH…LFFC), 722-744 (KLRT…AALQ), and 745-766 (ALSR…LGDC).

It belongs to the LRRC8 family. As to quaternary structure, heterohexamer; oligomerizes with other LRRC8 proteins (LRRC8A, LRRC8C, LRRC8D and/or LRRC8B) to form a heterohexamer. In vivo, the subunit composition may depend primarily on expression levels, and heterooligomeric channels containing various proportions of the different LRRC8 proteins may coexist.

It is found in the cell membrane. Its subcellular location is the endoplasmic reticulum membrane. The protein resides in the lysosome membrane. The catalysed reaction is chloride(in) = chloride(out). It catalyses the reaction iodide(out) = iodide(in). It carries out the reaction taurine(out) = taurine(in). The enzyme catalyses 2',3'-cGAMP(out) = 2',3'-cGAMP(in). Functionally, non-essential component of the volume-regulated anion channel (VRAC, also named VSOAC channel), an anion channel required to maintain a constant cell volume in response to extracellular or intracellular osmotic changes. The VRAC channel conducts iodide better than chloride and can also conduct organic osmolytes like taurine. Mediates efflux of amino acids, such as aspartate, in response to osmotic stress. The VRAC channel also mediates transport of immunoreactive cyclic dinucleotide GMP-AMP (2'-3'-cGAMP), an immune messenger produced in response to DNA virus in the cytosol. Channel activity requires LRRC8A plus at least one other family member (LRRC8B, LRRC8C, LRRC8D or LRRC8E); channel characteristics depend on the precise subunit composition. Also plays a role in lysosome homeostasis by forming functional lysosomal VRAC channels in response to low cytoplasmic ionic strength condition: lysosomal VRAC channels are necessary for the formation of large lysosome-derived vacuoles, which store and then expel excess water to maintain cytosolic water homeostasis. This chain is Volume-regulated anion channel subunit LRRC8E, found in Mus musculus (Mouse).